Here is a 141-residue protein sequence, read N- to C-terminus: Ribonuclease VapC16 (141 aa).

A Mg(2+)-binding site is contributed by aspartate 99. Residues 99–141 (DHAHTAHRRASGSPSTSIRPCAHRPGTAAWPDDHHRRRPVSCL) are disordered.

It belongs to the PINc/VapC protein family. The cofactor is Mg(2+).

Its function is as follows. Toxic component of a type II toxin-antitoxin (TA) system. An RNase. The cognate antitoxin is VapB16. The polypeptide is Ribonuclease VapC16 (Mycobacterium tuberculosis (strain ATCC 25618 / H37Rv)).